We begin with the raw amino-acid sequence, 141 residues long: Protein NrdI (141 aa).

The protein belongs to the NrdI family.

Probably involved in ribonucleotide reductase function. The chain is Protein NrdI from Bifidobacterium animalis subsp. lactis (strain AD011).